Reading from the N-terminus, the 218-residue chain is MALPLIQIALDNLSLASALNDLAKVGDAVDVIEVGTILLTAEGVNAVKEIAKRYPHKLIVADGKIADTGKVFNQMFFDAGAHFTTVICAAELPTVKDVVTVGNSYTPIKETQVEMTSNFTWEQVTQWKQVGVQQVVWHRSRDAQAAGVNWSDKDLQAVKRLADLGFKVTVTGGITLNDIQLFKDIPIYIFIAGRTIRDASDPLQTVQQFKDEFHKYWK.

Residue aspartate 11 coordinates substrate. Positions 33 and 62 each coordinate Mg(2+). Residue arginine 194 coordinates substrate.

It belongs to the HPS/KGPDC family. KGPDC subfamily. Mg(2+) is required as a cofactor.

It catalyses the reaction 3-dehydro-L-gulonate 6-phosphate + H(+) = L-xylulose 5-phosphate + CO2. It functions in the pathway cofactor degradation; L-ascorbate degradation; D-xylulose 5-phosphate from L-ascorbate: step 2/4. Functionally, catalyzes the decarboxylation of 3-keto-L-gulonate-6-P into L-xylulose-5-P. Is involved in the anaerobic L-ascorbate utilization. This is Probable 3-keto-L-gulonate-6-phosphate decarboxylase (ulaD) from Mycoplasma pneumoniae (strain ATCC 29342 / M129 / Subtype 1) (Mycoplasmoides pneumoniae).